We begin with the raw amino-acid sequence, 96 residues long: Co-chaperonin GroES (96 aa).

Belongs to the GroES chaperonin family. Heptamer of 7 subunits arranged in a ring. Interacts with the chaperonin GroEL.

It localises to the cytoplasm. In terms of biological role, together with the chaperonin GroEL, plays an essential role in assisting protein folding. The GroEL-GroES system forms a nano-cage that allows encapsulation of the non-native substrate proteins and provides a physical environment optimized to promote and accelerate protein folding. GroES binds to the apical surface of the GroEL ring, thereby capping the opening of the GroEL channel. This Myxococcus xanthus (strain DK1622) protein is Co-chaperonin GroES.